Reading from the N-terminus, the 1015-residue chain is DNA ligase 3 (1015 aa).

A PARP-type zinc finger spans residues 94 to 186 (FCVDYAKRGT…QISQHIADLS (93 aa)). Residues C106, C109, H140, and C143 each contribute to the Zn(2+) site. Phosphoserine occurs at positions 211, 217, 228, and 244. The segment at 229–255 (GFSAAKPNNSEQAPSSPAPGTSLSASK) is disordered. Residues 234 to 253 (KPNNSEQAPSSPAPGTSLSA) show a composition bias toward polar residues. Interaction with DNA stretches follow at residues 279-282 (PSYN), 323-328 (VYNLND), 393-396 (TKED), and 426-432 (KMNSGAK). Residue E511 participates in ATP binding. K513 (N6-AMP-lysine intermediate) is an active-site residue. ATP is bound by residues R518 and R533. Residues E565 and E660 each contribute to the Mg(2+) site. ATP-binding residues include K665, R676, and K680. Residues 849 to 926 (DEASPTTGGS…KSSPVKVGMK (78 aa)) are disordered. Over residues 854 to 884 (TTGGSSGENEGTAGSAGPCKGPPSKSSASAK) the composition is skewed to low complexity. S919 carries the phosphoserine modification. Residues 939-1015 (VLLDVFTGVR…IRKRRLIAPC (77 aa)) enclose the BRCT domain.

This sequence belongs to the ATP-dependent DNA ligase family. As to quaternary structure, isoform 3 interacts (via BRCT domain) with the nuclear DNA-repair protein XRCC1. Interacts with POLG. Interacts with POLB. It depends on Mg(2+) as a cofactor. In terms of tissue distribution, the alpha isoform is expressed in all tissues, while the beta isoform is expressed only in the testis.

It localises to the nucleus. It catalyses the reaction ATP + (deoxyribonucleotide)n-3'-hydroxyl + 5'-phospho-(deoxyribonucleotide)m = (deoxyribonucleotide)n+m + AMP + diphosphate.. Functionally, the alpha isoform interacts with DNA-repair protein XRCC1 and can correct defective DNA strand-break repair and sister chromatid exchange following treatment with ionizing radiation and alkylating agents. The beta isoform does not interact with XRCC1 and may be specifically involved in the completion of homologous recombination events that occur during meiotic prophase. This is DNA ligase 3 (Lig3) from Mus musculus (Mouse).